We begin with the raw amino-acid sequence, 403 residues long: tRNA methyltransferase 10 homolog C (403 aa).

A mitochondrion-targeting transit peptide spans 1 to 39 (MAAFLKMSVSVNFFRPFTRFLVPFTLHRKRNNLTILQRY). Position 84 is a phosphoserine (Ser-84). Positions 138–169 (TKEKVKKARQIKKEMKAAAREEAKNIKLLETT) form a coiled coil. In terms of domain architecture, SAM-dependent MTase TRM10-type spans 191–383 (MGWKGAQAMQ…QFVPKRKHTG (193 aa)).

Belongs to the class IV-like SAM-binding methyltransferase superfamily. TRM10 family. As to quaternary structure, component of mitochondrial ribonuclease P, a complex composed of TRMT10C/MRPP1, HSD17B10/MRPP2 and PRORP/MRPP3. Interacts with HSD17B10/MRPP2; forming the MRPP1-MRPP2 subcomplex of the mitochondrial ribonuclease P complex. Interacts with GRSF1.

The protein resides in the mitochondrion matrix. It is found in the mitochondrion nucleoid. It catalyses the reaction adenosine(9) in tRNA + S-adenosyl-L-methionine = N(1)-methyladenosine(9) in tRNA + S-adenosyl-L-homocysteine + H(+). It carries out the reaction guanosine(9) in tRNA + S-adenosyl-L-methionine = N(1)-methylguanosine(9) in tRNA + S-adenosyl-L-homocysteine + H(+). The catalysed reaction is an adenosine in mRNA + S-adenosyl-L-methionine = an N(1)-methyladenosine in mRNA + S-adenosyl-L-homocysteine + H(+). Mitochondrial tRNA N(1)-methyltransferase involved in mitochondrial tRNA maturation. Component of mitochondrial ribonuclease P, a complex composed of TRMT10C/MRPP1, HSD17B10/MRPP2 and PRORP/MRPP3, which cleaves tRNA molecules in their 5'-ends. Together with HSD17B10/MRPP2, forms a subcomplex of the mitochondrial ribonuclease P, named MRPP1-MRPP2 subcomplex, which displays functions that are independent of the ribonuclease P activity. The MRPP1-MRPP2 subcomplex catalyzes the formation of N(1)-methylguanine and N(1)-methyladenine at position 9 (m1G9 and m1A9, respectively) in tRNAs; TRMT10C/MRPP1 acting as the catalytic N(1)-methyltransferase subunit. The MRPP1-MRPP2 subcomplex also acts as a tRNA maturation platform: following 5'-end cleavage by the mitochondrial ribonuclease P complex, the MRPP1-MRPP2 subcomplex enhances the efficiency of 3'-processing catalyzed by ELAC2, retains the tRNA product after ELAC2 processing and presents the nascent tRNA to the mitochondrial CCA tRNA nucleotidyltransferase TRNT1 enzyme. In addition to tRNA N(1)-methyltransferase activity, TRMT10C/MRPP1 also acts as a mRNA N(1)-methyltransferase by mediating methylation of adenosine residues at the N(1) position of MT-ND5 mRNA. Associates with mitochondrial DNA complexes at the nucleoids to initiate RNA processing and ribosome assembly. In Homo sapiens (Human), this protein is tRNA methyltransferase 10 homolog C.